A 411-amino-acid chain; its full sequence is ATPase GET3B (411 aa).

A chloroplast-targeting transit peptide spans 1 to 67 (MATLSSYLLS…RRRNSLQVKS (67 aa)). An ATP-binding site is contributed by 95–102 (KGGVGKTS). Aspartate 124 is a catalytic residue. Asparagine 348 serves as a coordination point for ATP.

It belongs to the arsA ATPase family.

The protein resides in the plastid. The protein localises to the chloroplast stroma. It catalyses the reaction ATP + H2O = ADP + phosphate + H(+). The sequence is that of ATPase GET3B from Arabidopsis thaliana (Mouse-ear cress).